The following is a 616-amino-acid chain: Chaperone protein HscA homolog (616 aa).

It belongs to the heat shock protein 70 family.

In terms of biological role, probable chaperone. Has a low intrinsic ATPase activity which is markedly stimulated by HscB. This is Chaperone protein HscA homolog from Vibrio cholerae serotype O1 (strain ATCC 39315 / El Tor Inaba N16961).